Here is a 713-residue protein sequence, read N- to C-terminus: Cyclomaltodextrin glucanotransferase (713 aa).

An N-terminal signal peptide occupies residues 1–27 (MKKQVKWLTSVSMSVGIALGAALPVWA). The tract at residues 28 to 165 (SPDTSVNNKL…NIKVVMDFAP (138 aa)) is A1. Aspartate 54, asparagine 56, asparagine 59, asparagine 60, glycine 78, and aspartate 80 together coordinate Ca(2+). Residue 127–128 (YW) participates in substrate binding. Asparagine 166 contributes to the Ca(2+) binding site. A b region spans residues 166 to 229 (NHTNPASSTD…NLYDLADINQ (64 aa)). Histidine 167 provides a ligand contact to substrate. Isoleucine 217 provides a ligand contact to Ca(2+). Residue 220–223 (NLYD) coordinates substrate. A Ca(2+)-binding site is contributed by aspartate 226. The interval 230–434 (NNNTIDSYLK…LRKSNPALAY (205 aa)) is A2. Arginine 254 serves as a coordination point for substrate. Aspartate 256 (nucleophile) is an active-site residue. Residue 259–260 (KH) participates in substrate binding. A Ca(2+)-binding site is contributed by histidine 260. Glutamate 285 (proton donor) is an active-site residue. Substrate contacts are provided by histidine 355, aspartate 399, and arginine 403. The segment at 435 to 522 (GSTTQRWVNS…GTAVWQYTTT (88 aa)) is c. The tract at residues 523–609 (ESSPIIGNVG…SAAFNNFNVL (87 aa)) is d. Positions 526 to 606 (PIIGNVGPTM…GTTSAAFNNF (81 aa)) constitute an IPT/TIG domain. Residues 608 to 713 (VLTADQVTVR…VATVTVDWQN (106 aa)) form the CBM20 domain. The tract at residues 610–713 (TADQVTVRFK…VATVTVDWQN (104 aa)) is e.

It belongs to the glycosyl hydrolase 13 family. In terms of assembly, monomer. Requires Ca(2+) as cofactor.

Its subcellular location is the secreted. It carries out the reaction Cyclizes part of a (1-&gt;4)-alpha-D-glucan chain by formation of a (1-&gt;4)-alpha-D-glucosidic bond.. This chain is Cyclomaltodextrin glucanotransferase, found in Paenibacillus macerans (Bacillus macerans).